The sequence spans 104 residues: Phosphoribosyl-ATP pyrophosphatase (104 aa).

The protein belongs to the PRA-PH family.

It localises to the cytoplasm. It carries out the reaction 1-(5-phospho-beta-D-ribosyl)-ATP + H2O = 1-(5-phospho-beta-D-ribosyl)-5'-AMP + diphosphate + H(+). Its pathway is amino-acid biosynthesis; L-histidine biosynthesis; L-histidine from 5-phospho-alpha-D-ribose 1-diphosphate: step 2/9. The polypeptide is Phosphoribosyl-ATP pyrophosphatase (Nitrosococcus oceani (strain ATCC 19707 / BCRC 17464 / JCM 30415 / NCIMB 11848 / C-107)).